The following is a 280-amino-acid chain: 2-dehydro-3-deoxyphosphooctonate aldolase (280 aa).

The protein belongs to the KdsA family.

It is found in the cytoplasm. It carries out the reaction D-arabinose 5-phosphate + phosphoenolpyruvate + H2O = 3-deoxy-alpha-D-manno-2-octulosonate-8-phosphate + phosphate. The protein operates within carbohydrate biosynthesis; 3-deoxy-D-manno-octulosonate biosynthesis; 3-deoxy-D-manno-octulosonate from D-ribulose 5-phosphate: step 2/3. Its pathway is bacterial outer membrane biogenesis; lipopolysaccharide biosynthesis. The chain is 2-dehydro-3-deoxyphosphooctonate aldolase from Desulfotalea psychrophila (strain LSv54 / DSM 12343).